Here is a 308-residue protein sequence, read N- to C-terminus: UDP-N-acetylenolpyruvoylglucosamine reductase (308 aa).

The FAD-binding PCMH-type domain maps to 22–185 (RVGGPADWLF…TEATFRAEAG (164 aa)). Residue Arg-165 is part of the active site. The segment covering 197-211 (QIARRDSSQPTKERS) has biased composition (basic and acidic residues). The interval 197 to 228 (QIARRDSSQPTKERSAGSTFRNPAGFSSTGRA) is disordered. A compositionally biased stretch (polar residues) spans 212–226 (AGSTFRNPAGFSSTG). Ser-214 serves as the catalytic Proton donor. Residue Glu-296 is part of the active site.

Belongs to the MurB family. FAD is required as a cofactor.

The protein localises to the cytoplasm. It catalyses the reaction UDP-N-acetyl-alpha-D-muramate + NADP(+) = UDP-N-acetyl-3-O-(1-carboxyvinyl)-alpha-D-glucosamine + NADPH + H(+). It functions in the pathway cell wall biogenesis; peptidoglycan biosynthesis. Cell wall formation. The polypeptide is UDP-N-acetylenolpyruvoylglucosamine reductase (Cereibacter sphaeroides (strain ATCC 17023 / DSM 158 / JCM 6121 / CCUG 31486 / LMG 2827 / NBRC 12203 / NCIMB 8253 / ATH 2.4.1.) (Rhodobacter sphaeroides)).